Reading from the N-terminus, the 140-residue chain is Small ribosomal subunit protein uS9 (140 aa).

The protein belongs to the universal ribosomal protein uS9 family.

The chain is Small ribosomal subunit protein uS9 from Desulfurococcus amylolyticus (strain DSM 18924 / JCM 16383 / VKM B-2413 / 1221n) (Desulfurococcus kamchatkensis).